The following is a 205-amino-acid chain: Cell wall / vacuolar inhibitor of fructosidase 1 (205 aa).

An N-terminal signal peptide occupies residues 1–23; that stretch reads MKMMKVMMLIVMMMMVMVMVSEG. 2 disulfides stabilise this stretch: Cys-30/Cys-39 and Cys-93/Cys-134. N-linked (GlcNAc...) asparagine glycans are attached at residues Asn-139 and Asn-156.

Belongs to the PMEI family. In terms of tissue distribution, mostly expressed in roots, senescent leaves and flowers (in sepals), and, to a lower extent, in stems, specifically in the vascular tissues (e.g. in the phloem).

The protein localises to the vacuole. Functionally, inhibits fructosidases from vacuoles (vacuolar invertase VI). The chain is Cell wall / vacuolar inhibitor of fructosidase 1 (C/VIF1) from Arabidopsis thaliana (Mouse-ear cress).